Consider the following 45-residue polypeptide: Host translation inhibitor E66L (45 aa).

Belongs to the asfivirus E66L family.

Its subcellular location is the host endoplasmic reticulum. Inhibits host protein translation, probably through the EIF2AK2/EIF2S1 signaling pathway. Promotes cell retention in the G0/G1 phase. The protein is Host translation inhibitor E66L of Ornithodoros (relapsing fever ticks).